Here is a 260-residue protein sequence, read N- to C-terminus: Ribosomal RNA small subunit methyltransferase J (260 aa).

S-adenosyl-L-methionine-binding positions include 101-102 (RD), 117-118 (ER), 153-154 (SS), and D176.

Belongs to the methyltransferase superfamily. RsmJ family.

Its subcellular location is the cytoplasm. The catalysed reaction is guanosine(1516) in 16S rRNA + S-adenosyl-L-methionine = N(2)-methylguanosine(1516) in 16S rRNA + S-adenosyl-L-homocysteine + H(+). Specifically methylates the guanosine in position 1516 of 16S rRNA. This is Ribosomal RNA small subunit methyltransferase J from Aliivibrio salmonicida (strain LFI1238) (Vibrio salmonicida (strain LFI1238)).